A 156-amino-acid chain; its full sequence is Small ribosomal subunit protein uS7 (156 aa).

It belongs to the universal ribosomal protein uS7 family. Part of the 30S ribosomal subunit. Contacts proteins S9 and S11.

In terms of biological role, one of the primary rRNA binding proteins, it binds directly to 16S rRNA where it nucleates assembly of the head domain of the 30S subunit. Is located at the subunit interface close to the decoding center, probably blocks exit of the E-site tRNA. The polypeptide is Small ribosomal subunit protein uS7 (Campylobacter jejuni subsp. jejuni serotype O:6 (strain 81116 / NCTC 11828)).